The sequence spans 124 residues: Seripauperin-15 (124 aa).

An N-terminal signal peptide occupies residues 1 to 20; that stretch reads MVKLTSIAAGVAAIAAGVAA.

It belongs to the SRP1/TIP1 family. Seripauperin subfamily.

The polypeptide is Seripauperin-15 (PAU15) (Saccharomyces cerevisiae (strain ATCC 204508 / S288c) (Baker's yeast)).